Here is a 263-residue protein sequence, read N- to C-terminus: Inner membrane protein YpjD (263 aa).

Residues 1-3 (MPV) lie on the Periplasmic side of the membrane. The chain crosses the membrane as a helical span at residues 4–23 (FALLALVAYSVSLALIVPGL). Residues 24-34 (LQKNGGWRRMA) lie on the Cytoplasmic side of the membrane. The chain crosses the membrane as a helical span at residues 35–54 (IISAVIALVCHAIALEARIL). The Periplasmic portion of the chain corresponds to 55 to 63 (PDGDSGQNL). Residues 64–83 (SLLNVGSLVSLMICTVMTIV) form a helical membrane-spanning segment. At 84–89 (ASRNRG) the chain is on the cytoplasmic side. A helical transmembrane segment spans residues 90–109 (WLLLPIVYAFALINLALATF). The Periplasmic portion of the chain corresponds to 110 to 123 (MPNEYITHLEATPG). A helical membrane pass occupies residues 124–146 (MLVHIGLSLFSYATLIIAALYAL). Over 147–181 (QLAWIDYQLKNKKLAFNQEMPPLMSIERKMFHITQ) the chain is Cytoplasmic. A helical membrane pass occupies residues 182-201 (IGVVLLTLTLCTGLFYMHNL). Over 202–210 (FSMENIDKA) the chain is Periplasmic. The chain crosses the membrane as a helical span at residues 211 to 228 (VLSIVAWFVYIVLLWGHY). Over 229-236 (HEGWRGRR) the chain is Cytoplasmic. The helical transmembrane segment at 237 to 259 (VVWFNVAGAVILTLAYFGSRIVQ) threads the bilayer. Over 260-263 (QLIS) the chain is Periplasmic.

The protein resides in the cell inner membrane. This is Inner membrane protein YpjD (ypjD) from Escherichia coli O157:H7.